The chain runs to 747 residues: Oxysterol-binding protein-related protein 11 (747 aa).

M1 bears the N-acetylmethionine mark. Residues 1–50 are disordered; sequence MQGGEPVSTMKVSESEGKLEGQATAVTPNKNSSCGGGISSSSSSRGGSAK. S15 carries the post-translational modification Phosphoserine. Phosphothreonine is present on T27. Positions 58-155 constitute a PH domain; that stretch reads MENVYGYLMK…WVSRLQICTQ (98 aa). At Y62 the chain carries Phosphotyrosine. The disordered stretch occupies residues 158-188; the sequence is TEAIGKNNPPLKSRSFSLASSSNSPISQRRP. A compositionally biased stretch (low complexity) spans 170 to 184; the sequence is SRSFSLASSSNSPIS. Phosphoserine is present on residues S172, S174, S177, S181, S184, and S189. Basic and acidic residues predominate over residues 689–713; it reads EIDKATEHKHTLEERQRTEERHRTE. Positions 689-714 are disordered; the sequence is EIDKATEHKHTLEERQRTEERHRTET.

The protein belongs to the OSBP family. Heterodimer with OSBPL9. As to expression, present at highest levels in ovary, testis, kidney, liver, stomach, brain, and adipose tissue. Strong expression (at protein level) in epithelial cells of kidney tubules, testicular tubules, caecum, and skin. Present at low levels in subcutaneous and visceral adipose tissue (at protein level).

Its subcellular location is the late endosome membrane. It is found in the golgi apparatus. The protein localises to the trans-Golgi network membrane. The catalysed reaction is a 1,2-diacyl-sn-glycero-3-phospho-(1D-myo-inositol 4-phosphate)(out) + a 1,2-diacyl-sn-glycero-3-phospho-L-serine(in) = a 1,2-diacyl-sn-glycero-3-phospho-(1D-myo-inositol 4-phosphate)(in) + a 1,2-diacyl-sn-glycero-3-phospho-L-serine(out). Plays a role in regulating ADIPOQ and FABP4 levels in differentiating adipocytes and is also involved in regulation of adipocyte triglyceride storage. Weakly binds 25-hydroxycholesterol. Interacts with OSBPL9 to function as lipid transfer proteins. Together they form a heterodimer that localizes at the ER-trans-Golgi membrane contact sites, and exchanges phosphatidylserine (1,2-diacyl-sn-glycero-3-phospho-L-serine, PS) for phosphatidylinositol-4-phosphate (1,2-diacyl-sn-glycero-3-phospho-(1D-myo-inositol 4-phosphate), PI(4)P) between the two organelles, a step that is critical for sphingomyelin synthesis in the Golgi complex. The protein is Oxysterol-binding protein-related protein 11 (OSBPL11) of Homo sapiens (Human).